The primary structure comprises 94 residues: Large ribosomal subunit protein bL25 (94 aa).

This sequence belongs to the bacterial ribosomal protein bL25 family. As to quaternary structure, part of the 50S ribosomal subunit; part of the 5S rRNA/L5/L18/L25 subcomplex. Contacts the 5S rRNA. Binds to the 5S rRNA independently of L5 and L18.

In terms of biological role, this is one of the proteins that binds to the 5S RNA in the ribosome where it forms part of the central protuberance. The polypeptide is Large ribosomal subunit protein bL25 (Klebsiella pneumoniae subsp. pneumoniae (strain ATCC 700721 / MGH 78578)).